The following is a 407-amino-acid chain: Putative D-cysteine desulfhydrase 2, mitochondrial (407 aa).

A mitochondrion-targeting transit peptide spans 1–34; the sequence is MRPSPALAGGGRTVANLLSATEWMLPSPATQVHT. The disordered stretch occupies residues 39–72; sequence PSHSPPSPPHHFAFSNLTTAPKRNGGKGEEEGRP. Position 90 is an N6-(pyridoxal phosphate)lysine (K90).

It belongs to the ACC deaminase/D-cysteine desulfhydrase family. Requires pyridoxal 5'-phosphate as cofactor.

The protein localises to the mitochondrion. The enzyme catalyses D-cysteine + H2O = hydrogen sulfide + pyruvate + NH4(+) + H(+). Functionally, catalyzes the production of hydrogen sulfide (H2S) from cysteine. In Oryza sativa subsp. japonica (Rice), this protein is Putative D-cysteine desulfhydrase 2, mitochondrial.